The chain runs to 592 residues: V-type ATP synthase alpha chain 1 (592 aa).

233–240 (GPFGSGKT) serves as a coordination point for ATP.

It belongs to the ATPase alpha/beta chains family.

It carries out the reaction ATP + H2O + 4 H(+)(in) = ADP + phosphate + 5 H(+)(out). Functionally, produces ATP from ADP in the presence of a proton gradient across the membrane. The V-type alpha chain is a catalytic subunit. This Clostridium tetani (strain Massachusetts / E88) protein is V-type ATP synthase alpha chain 1.